Here is a 396-residue protein sequence, read N- to C-terminus: MKNIVILGATGSIGQSTLSVIEHNPDQYQVFALVGGKNVELMATQCSQFKPKFAALVDEKAAKLLAEQLKALNLTTQVLTGEQAICELAAHPDANIVMAAIVGAAGLLPTLAAVKAGKQILLANKESLVTCGQIFIDEARKSGATLLPVDSEHNAIFQSLPLVAQQKIGFCPLAELGVSRIILTGSGGPFREKSLAEFDSITPEQAIAHPNWSMGKKISVDSATMMNKGLEYIEARWLFNASVEEMEIIIHPQSIIHSMVRYIDGSVIAQMGNPDMRTPIAHTMAYPNRIPSGVMPLDFGKLTELTFIEPDFKRYPNLKLAIEASAEGQYATTALNAANEIAVDAFLNRQIRFTEIERINSTVVENIAPLRVNDVADVLHIDQLAREIAKQAMLNV.

NADPH contacts are provided by Thr-10, Gly-11, Ser-12, Ile-13, Gly-36, Lys-37, Asn-38, and Asn-124. Lys-125 provides a ligand contact to 1-deoxy-D-xylulose 5-phosphate. Residue Glu-126 coordinates NADPH. Asp-150 contacts Mn(2+). 1-deoxy-D-xylulose 5-phosphate contacts are provided by Ser-151, Glu-152, Ser-186, and His-209. Glu-152 contacts Mn(2+). Position 215 (Gly-215) interacts with NADPH. 1-deoxy-D-xylulose 5-phosphate-binding residues include Ser-222, Asn-227, Lys-228, and Glu-231. Position 231 (Glu-231) interacts with Mn(2+).

It belongs to the DXR family. Mg(2+) is required as a cofactor. Mn(2+) serves as cofactor.

It catalyses the reaction 2-C-methyl-D-erythritol 4-phosphate + NADP(+) = 1-deoxy-D-xylulose 5-phosphate + NADPH + H(+). It participates in isoprenoid biosynthesis; isopentenyl diphosphate biosynthesis via DXP pathway; isopentenyl diphosphate from 1-deoxy-D-xylulose 5-phosphate: step 1/6. Catalyzes the NADPH-dependent rearrangement and reduction of 1-deoxy-D-xylulose-5-phosphate (DXP) to 2-C-methyl-D-erythritol 4-phosphate (MEP). This chain is 1-deoxy-D-xylulose 5-phosphate reductoisomerase, found in Haemophilus ducreyi (strain 35000HP / ATCC 700724).